Reading from the N-terminus, the 692-residue chain is Elongation factor G (692 aa).

One can recognise a tr-type G domain in the interval Glu-8–Leu-282. Residues Ala-17–Thr-24, Asp-81–His-85, and Asn-135–Asp-138 each bind GTP.

It belongs to the TRAFAC class translation factor GTPase superfamily. Classic translation factor GTPase family. EF-G/EF-2 subfamily.

The protein localises to the cytoplasm. Catalyzes the GTP-dependent ribosomal translocation step during translation elongation. During this step, the ribosome changes from the pre-translocational (PRE) to the post-translocational (POST) state as the newly formed A-site-bound peptidyl-tRNA and P-site-bound deacylated tRNA move to the P and E sites, respectively. Catalyzes the coordinated movement of the two tRNA molecules, the mRNA and conformational changes in the ribosome. This Geobacillus thermodenitrificans (strain NG80-2) protein is Elongation factor G.